Reading from the N-terminus, the 214-residue chain is Protein-L-isoaspartate O-methyltransferase 1 (214 aa).

S62 is a catalytic residue.

This sequence belongs to the methyltransferase superfamily. L-isoaspartyl/D-aspartyl protein methyltransferase family.

It localises to the cytoplasm. The catalysed reaction is [protein]-L-isoaspartate + S-adenosyl-L-methionine = [protein]-L-isoaspartate alpha-methyl ester + S-adenosyl-L-homocysteine. Functionally, catalyzes the methyl esterification of L-isoaspartyl residues in peptides and proteins that result from spontaneous decomposition of normal L-aspartyl and L-asparaginyl residues. It plays a role in the repair and/or degradation of damaged proteins. The sequence is that of Protein-L-isoaspartate O-methyltransferase 1 from Syntrophobacter fumaroxidans (strain DSM 10017 / MPOB).